Here is a 350-residue protein sequence, read N- to C-terminus: GDSL esterase/lipase At2g04570 (350 aa).

Positions 1-23 (MGHLKSLFTILFLIAMSSTVTFA) are cleaved as a signal peptide. The Nucleophile role is filled by Ser35. N-linked (GlcNAc...) asparagine glycosylation is found at Asn98 and Asn117. Catalysis depends on residues Asp325 and His328. Asn343 carries N-linked (GlcNAc...) asparagine glycosylation.

Belongs to the 'GDSL' lipolytic enzyme family.

The protein localises to the secreted. The chain is GDSL esterase/lipase At2g04570 from Arabidopsis thaliana (Mouse-ear cress).